The following is a 353-amino-acid chain: MSEPLKPRIDFAEPLKEEPTSAFKAQQTFSEAESRTFAPAAIDERPEDEGVAEAAVDAALRPKRSLWRKMVMGGLALFGASVVGQGVQWTMNAWQTQDWVALGGCAAGALIIGAGVGSVVTEWRRLWRLRQRAHERDEARELLHSHSVGKGRAFCEKLAQQAGIDQSHPALQRWYAAIHETQNDREIVGLYANLVQPVLDAQARREISRFAAESTLMIVVSPLALVDMAFIAWRNLRLINRIATLYGIELGYYSRLRLFRLVLLNIAFAGASELVREVGMDWMSQDLAARLSTRAAQGIGAGLLTARLGIKAMELCRPLPWIDNDKPRLGDFRRQLIGQLKETLQKSKSSPEK.

Over residues Met-1 to Pro-19 the composition is skewed to basic and acidic residues. The disordered stretch occupies residues Met-1–Arg-35. 3 helical membrane-spanning segments follow: residues Met-70 to Thr-90, Val-100 to Val-120, and Glu-213 to Trp-233.

This sequence belongs to the UPF0283 family.

The protein resides in the cell inner membrane. This chain is UPF0283 membrane protein YcjF, found in Salmonella newport (strain SL254).